Reading from the N-terminus, the 139-residue chain is Putative pre-16S rRNA nuclease (139 aa).

This sequence belongs to the YqgF nuclease family.

The protein resides in the cytoplasm. Could be a nuclease involved in processing of the 5'-end of pre-16S rRNA. The polypeptide is Putative pre-16S rRNA nuclease (Legionella pneumophila (strain Paris)).